The chain runs to 114 residues: Hydrogenase maturation factor HypA (114 aa).

H2 is a Ni(2+) binding site. Zn(2+)-binding residues include C70, C73, C86, and C89.

Belongs to the HypA/HybF family.

Involved in the maturation of [NiFe] hydrogenases. Required for nickel insertion into the metal center of the hydrogenase. The protein is Hydrogenase maturation factor HypA of Crocosphaera subtropica (strain ATCC 51142 / BH68) (Cyanothece sp. (strain ATCC 51142)).